Here is a 461-residue protein sequence, read N- to C-terminus: Probable ribonuclease FAU-1 (461 aa).

Positions 89–158 (GAVFYGEVTE…ARPSLATALR (70 aa)) constitute an S1 motif domain.

Belongs to the FAU-1 family.

Its function is as follows. Probable RNase involved in rRNA stability through maturation and/or degradation of precursor rRNAs. Binds to RNA in loop regions with AU-rich sequences. The polypeptide is Probable ribonuclease FAU-1 (Natronomonas pharaonis (strain ATCC 35678 / DSM 2160 / CIP 103997 / JCM 8858 / NBRC 14720 / NCIMB 2260 / Gabara) (Halobacterium pharaonis)).